Here is a 339-residue protein sequence, read N- to C-terminus: UDP-N-acetylenolpyruvoylglucosamine reductase (339 aa).

The region spanning V19–E189 is the FAD-binding PCMH-type domain. The active site involves R166. Residue S239 is the Proton donor of the active site. The active site involves E335.

This sequence belongs to the MurB family. FAD serves as cofactor.

It localises to the cytoplasm. It carries out the reaction UDP-N-acetyl-alpha-D-muramate + NADP(+) = UDP-N-acetyl-3-O-(1-carboxyvinyl)-alpha-D-glucosamine + NADPH + H(+). Its pathway is cell wall biogenesis; peptidoglycan biosynthesis. Functionally, cell wall formation. In Pseudomonas syringae pv. tomato (strain ATCC BAA-871 / DC3000), this protein is UDP-N-acetylenolpyruvoylglucosamine reductase.